We begin with the raw amino-acid sequence, 91 residues long: Probable Fe(2+)-trafficking protein (91 aa).

Belongs to the Fe(2+)-trafficking protein family.

Functionally, could be a mediator in iron transactions between iron acquisition and iron-requiring processes, such as synthesis and/or repair of Fe-S clusters in biosynthetic enzymes. In Actinobacillus pleuropneumoniae serotype 5b (strain L20), this protein is Probable Fe(2+)-trafficking protein.